The sequence spans 86 residues: Small ribosomal subunit protein bS20 (86 aa).

It belongs to the bacterial ribosomal protein bS20 family.

Binds directly to 16S ribosomal RNA. The polypeptide is Small ribosomal subunit protein bS20 (Sulfurimonas denitrificans (strain ATCC 33889 / DSM 1251) (Thiomicrospira denitrificans (strain ATCC 33889 / DSM 1251))).